We begin with the raw amino-acid sequence, 130 residues long: Small ribosomal subunit protein uS8 (130 aa).

It belongs to the universal ribosomal protein uS8 family. Part of the 30S ribosomal subunit. Contacts proteins S5 and S12.

Functionally, one of the primary rRNA binding proteins, it binds directly to 16S rRNA central domain where it helps coordinate assembly of the platform of the 30S subunit. The sequence is that of Small ribosomal subunit protein uS8 from Aeromonas salmonicida (strain A449).